The sequence spans 413 residues: Tyrosine--tRNA ligase (413 aa).

The short motif at 59–68 (PTAPDIHLGH) is the 'HIGH' region element. The short motif at 243–247 (KMSKS) is the 'KMSKS' region element. ATP is bound at residue K246. Residues 351 to 411 (LAIGQLLKQA…GKRRFARVTL (61 aa)) enclose the S4 RNA-binding domain.

Belongs to the class-I aminoacyl-tRNA synthetase family. TyrS type 2 subfamily. As to quaternary structure, homodimer.

It is found in the cytoplasm. The enzyme catalyses tRNA(Tyr) + L-tyrosine + ATP = L-tyrosyl-tRNA(Tyr) + AMP + diphosphate + H(+). Functionally, catalyzes the attachment of tyrosine to tRNA(Tyr) in a two-step reaction: tyrosine is first activated by ATP to form Tyr-AMP and then transferred to the acceptor end of tRNA(Tyr). The sequence is that of Tyrosine--tRNA ligase from Burkholderia mallei (strain ATCC 23344).